The primary structure comprises 396 residues: Elongation factor Tu (396 aa).

The tr-type G domain occupies 10 to 206; the sequence is KPHVNIGTIG…ACDTYIPAPV (197 aa). The segment at 19-26 is G1; it reads GHVDHGKT. Residue 19 to 26 coordinates GTP; sequence GHVDHGKT. Mg(2+) is bound at residue Thr26. The tract at residues 60–64 is G2; that stretch reads GITIS. Positions 81–84 are G3; it reads DCPG. Residues 81–85 and 136–139 contribute to the GTP site; these read DCPGH and NKVD. The tract at residues 136 to 139 is G4; that stretch reads NKVD. Positions 174–176 are G5; it reads SAL.

It belongs to the TRAFAC class translation factor GTPase superfamily. Classic translation factor GTPase family. EF-Tu/EF-1A subfamily. In terms of assembly, monomer.

The protein resides in the cytoplasm. It carries out the reaction GTP + H2O = GDP + phosphate + H(+). In terms of biological role, GTP hydrolase that promotes the GTP-dependent binding of aminoacyl-tRNA to the A-site of ribosomes during protein biosynthesis. This chain is Elongation factor Tu, found in Bdellovibrio bacteriovorus (strain ATCC 15356 / DSM 50701 / NCIMB 9529 / HD100).